Consider the following 94-residue polypeptide: Protein S100-A1 (94 aa).

EF-hand domains lie at isoleucine 13–valine 48 and lysine 50–alanine 85. Lysine 28, glutamate 33, aspartate 63, asparagine 65, aspartate 67, glutamate 69, and glutamate 74 together coordinate Ca(2+). An S-nitrosocysteine modification is found at cysteine 86.

The protein belongs to the S-100 family. As to quaternary structure, dimer of either two alpha chains, or two beta chains, or one alpha and one beta chain. Also forms heterodimers with S100P. Interacts with AGER. Interacts with CAPZA1. Interacts with FKBP4. Interacts with RYR1 and RYR2. Interacts with CACYBP in a calcium-dependent manner. Interacts with PPP5C (via TPR repeats); the interaction is calcium-dependent and modulates PPP5C activity. Interacts with ATP2A2 and PLN in a Ca(2+)-dependent manner. Interacts with mitochondrial F1-ATPase subunits ATP5F1A and ATP5F1B; these interactions increase F1-ATPase activity. Glutathionylated; glutathionylation increases affinity to calcium about 10-fold. As to expression, expressed in the cardiac and the skeletal muscles.

The protein localises to the cytoplasm. Its subcellular location is the sarcoplasmic reticulum. The protein resides in the mitochondrion. Small calcium binding protein that plays important roles in several biological processes such as Ca(2+) homeostasis, chondrocyte biology and cardiomyocyte regulation. In response to an increase in intracellular Ca(2+) levels, binds calcium which triggers conformational changes. These changes allow interactions with specific target proteins and modulate their activity. Regulates a network in cardiomyocytes controlling sarcoplasmic reticulum Ca(2+) cycling and mitochondrial function through interaction with the ryanodine receptors RYR1 and RYR2, sarcoplasmic reticulum Ca(2+)-ATPase/ATP2A2 and mitochondrial F1-ATPase. Facilitates diastolic Ca(2+) dissociation and myofilament mechanics in order to improve relaxation during diastole. This is Protein S100-A1 (S100a1) from Mus musculus (Mouse).